Reading from the N-terminus, the 146-residue chain is Urease accessory protein UreE 1 (146 aa).

Belongs to the UreE family.

It localises to the cytoplasm. Functionally, involved in urease metallocenter assembly. Binds nickel. Probably functions as a nickel donor during metallocenter assembly. This Pseudomonas syringae pv. tomato (strain ATCC BAA-871 / DC3000) protein is Urease accessory protein UreE 1.